A 204-amino-acid chain; its full sequence is GTP cyclohydrolase 1 (204 aa).

The Zn(2+) site is built by cysteine 93, histidine 96, and cysteine 164.

This sequence belongs to the GTP cyclohydrolase I family. As to quaternary structure, toroid-shaped homodecamer, composed of two pentamers of five dimers.

The enzyme catalyses GTP + H2O = 7,8-dihydroneopterin 3'-triphosphate + formate + H(+). The protein operates within cofactor biosynthesis; 7,8-dihydroneopterin triphosphate biosynthesis; 7,8-dihydroneopterin triphosphate from GTP: step 1/1. This is GTP cyclohydrolase 1 from Rhizobium meliloti (strain 1021) (Ensifer meliloti).